The following is a 177-amino-acid chain: MLDAFSRVVVTSDAKAAYVGGSDLQSLKSFINDGNKRLDAVNYIVSNASCIVSDAVSGMICENPGLIAPGGNCYTNRRMAACLRDGEIILRYVSYALLAGDSSVLDDRCLNGLKETYIALGVPTASSSRAVSIMKATATAFITNTASGRKVEVAAGDCQALQAEAASYFDKVGSSID.

(2R,3E)-phycoerythrobilin-binding residues include asparagine 35 and aspartate 39. Positions 50, 54, and 61 each coordinate phycourobilin. Residues asparagine 72, 77 to 78, cysteine 82, and 84 to 85 contribute to the (2R,3E)-phycoerythrobilin site; these read RR and RD. Position 72 is an N4-methylasparagine (asparagine 72). 147-148 contributes to the phycourobilin binding site; that stretch reads SG. Position 158 (cysteine 158) interacts with (2R,3E)-phycoerythrobilin.

The protein belongs to the phycobiliprotein family. As to quaternary structure, heterododecamer of 6 alpha and 6 beta chains. The basic functional unit of phycobiliproteins is a ring-shaped hexamer formed from two back-to-back trimers contacting via the alpha chain subunits. The trimers are composed of alpha/beta subunit heterodimers arranged around a three-fold axis of symmetry. The phycoerythrins also contain a gamma subunit which is located in the center of the hexamer. In terms of processing, contains two covalently linked phycoerythrobilin chromophores and one covalently linked phycourobilin chromophore.

It is found in the plastid. Its subcellular location is the chloroplast thylakoid membrane. Light-harvesting photosynthetic tetrapyrrole chromophore-protein from the phycobiliprotein complex. This Griffithsia monilis (Red alga) protein is R-phycoerythrin beta chain (cpeB).